Reading from the N-terminus, the 72-residue chain is Translation initiation factor IF-1 (72 aa).

The region spanning 1-72 (MAKEENIEMQ…SKGRIIFRAR (72 aa)) is the S1-like domain.

It belongs to the IF-1 family. In terms of assembly, component of the 30S ribosomal translation pre-initiation complex which assembles on the 30S ribosome in the order IF-2 and IF-3, IF-1 and N-formylmethionyl-tRNA(fMet); mRNA recruitment can occur at any time during PIC assembly.

The protein localises to the cytoplasm. Its function is as follows. One of the essential components for the initiation of protein synthesis. Stabilizes the binding of IF-2 and IF-3 on the 30S subunit to which N-formylmethionyl-tRNA(fMet) subsequently binds. Helps modulate mRNA selection, yielding the 30S pre-initiation complex (PIC). Upon addition of the 50S ribosomal subunit IF-1, IF-2 and IF-3 are released leaving the mature 70S translation initiation complex. The polypeptide is Translation initiation factor IF-1 (Colwellia psychrerythraea (strain 34H / ATCC BAA-681) (Vibrio psychroerythus)).